The following is a 340-amino-acid chain: Serine racemase (340 aa).

Glutamate 13 provides a ligand contact to Mg(2+). The ATP site is built by serine 31, serine 32, isoleucine 33, lysine 51, and threonine 52. Residue lysine 56 is the Proton acceptor of the active site. Lysine 56 carries the N6-(pyridoxal phosphate)lysine modification. Ca(2+) is bound by residues proline 69 and threonine 81. Serine 84 (proton acceptor) is an active-site residue. Asparagine 86 contacts pyridoxal 5'-phosphate. Glutamine 89 contacts ATP. S-nitrosocysteine is present on cysteine 113. Tyrosine 121 contributes to the ATP binding site. A pyridoxal 5'-phosphate-binding site is contributed by asparagine 154. Position 178 (aspartate 178) interacts with Mg(2+). Pyridoxal 5'-phosphate-binding residues include glycine 185, glycine 186, glycine 187, glycine 188, and methionine 189. Mg(2+) contacts are provided by glutamate 210, alanine 214, aspartate 216, and asparagine 247. Positions 210, 214, 216, and 247 each coordinate Ca(2+). Positions 210, 214, and 216 each coordinate Mn(2+). Lysine 279 is an ATP binding site. Position 313 (serine 313) interacts with pyridoxal 5'-phosphate. Asparagine 316 contacts ATP.

This sequence belongs to the serine/threonine dehydratase family. In terms of assembly, homodimer. It depends on Mg(2+) as a cofactor. The cofactor is Mn(2+). Ca(2+) serves as cofactor. Pyridoxal 5'-phosphate is required as a cofactor. In terms of processing, S-nitrosylated, leading to decrease the enzyme activity. Expressed in the cerebellum, hippocampus, dorsolateral prefrontal cortex, and in motor neurons and glial cells of the lumbar spinal cord (at protein level). Increased in the dorsolateral prefrontal cortex of schizophrenic patients (at protein level). Brain: expressed at high levels in hippocampus and corpus callosum, intermediate levels in substantia nigra and caudate, and low levels in amygdala, thalamus, and subthalamic nuclei. Expressed in heart, skeletal muscle, kidney, and liver.

The enzyme catalyses L-serine = D-serine. The catalysed reaction is D-serine = pyruvate + NH4(+). It catalyses the reaction L-serine = pyruvate + NH4(+). Its activity is regulated as follows. Allosterically activated by magnesium, and possibly also other divalent metal cations. Allosterically activated by ATP, ADP or GTP. Competitively inhibited by malonate. Inhibited by meso-tartrate and malonate. In terms of biological role, catalyzes the synthesis of D-serine from L-serine. D-serine is a key coagonist with glutamate at NMDA receptors. Has dehydratase activity towards both L-serine and D-serine. This Homo sapiens (Human) protein is Serine racemase (SRR).